Reading from the N-terminus, the 1729-residue chain is 182 kDa tankyrase-1-binding protein (1729 aa).

The span at 1-12 (MKVSTLRESSAM) shows a compositional bias: polar residues. Residues 1–151 (MKVSTLRESS…VRKAPAPFRP (151 aa)) are disordered. S14 is modified (phosphoserine). Over residues 46–63 (ALPAKPALPAKPSLLVPV) the composition is skewed to low complexity. A compositionally biased stretch (basic and acidic residues) spans 117–127 (TGKEEAGKEEP). T131 carries the phosphothreonine modification. A phosphoserine mark is found at S178, S221, and S228. 3 disordered regions span residues 184–450 (GSRL…LAAL), 484–603 (PSGL…ESPL), and 657–880 (ETTQ…SSRD). The interval 210–1572 (DEDGSTLFRG…TEILDSAMYR (1363 aa)) is acidic. The segment covering 230–245 (AECREEHSKTPEERSL) has biased composition (basic and acidic residues). The residue at position 239 (T239) is a Phosphothreonine. S287 and S301 each carry phosphoserine. Residues 352–363 (PSPGLPAEGAPE) show a composition bias toward low complexity. Over residues 364-374 (APRPSSPPPEV) the composition is skewed to pro residues. 5 positions are modified to phosphoserine: S429, S435, S437, S494, and S498. Low complexity-rich tracts occupy residues 500–512 (ITEASEAAEAAEA), 524–541 (VSQQGQGAGSAPSGSGSS), and 572–583 (LPTTEGTPGLPL). Position 501 is a phosphothreonine (T501). Residues S601, S672, S691, S695, S712, S724, S744, S762, and S806 each carry the phosphoserine modification. Polar residues predominate over residues 738–753 (PQPSSFSPSSWCQGAS). Residues 803-812 (ASSSQDQSKV) show a composition bias toward polar residues. A Phosphothreonine modification is found at T833. Phosphoserine occurs at positions 836, 851, 872, 877, 882, and 893. A compositionally biased stretch (basic and acidic residues) spans 858 to 872 (RDAELQDQEFGKRDS). The residue at position 897 (Y897) is a Phosphotyrosine. The interval 897–1083 (YASQDANEQG…ADLEDGEMGK (187 aa)) is disordered. Phosphoserine occurs at positions 899, 920, 936, and 976. T979 is modified (phosphothreonine). Phosphoserine is present on residues S983, S987, S1004, S1008, S1013, S1024, S1029, S1054, S1073, S1091, S1103, S1133, S1138, S1158, S1178, S1248, and S1253. Basic and acidic residues predominate over residues 1012-1021 (GSRDAGRPGE). Residues 1043 to 1054 (RDQSSWQNSDAS) are compositionally biased toward polar residues. The tract at residues 1240–1302 (EVGEGGGHSQ…GAVCSPGESK (63 aa)) is disordered. Residue T1282 is modified to Phosphothreonine. 5 positions are modified to phosphoserine: S1297, S1328, S1331, S1383, and S1385. The interval 1362 to 1561 (AREHGVGGVS…SPSQDFSFIE (200 aa)) is disordered. Basic and acidic residues predominate over residues 1389 to 1400 (EARDPLEARELG). Positions 1406–1419 (GPETQGEDYSSSSL) are enriched in polar residues. Residues S1435, S1439, S1450, S1452, S1473, S1476, S1503, and S1506 each carry the phosphoserine modification. The tract at residues 1450–1542 (SGSQGLLEEM…SDQGPAQTSR (93 aa)) is tankyrase-binding. Phosphothreonine is present on T1518. Phosphoserine occurs at positions 1533, 1545, and 1558. Phosphothreonine is present on T1563. Positions 1575–1729 (ANLGRKRGHR…QALKLKKKKV (155 aa)) are disordered. Residues 1577 to 1586 (LGRKRGHRAP) show a composition bias toward basic residues. Positions 1602–1615 (SDAHLFQDSTEPRA) are enriched in basic and acidic residues. 3 positions are modified to phosphoserine: S1620, S1621, and S1631. The short motif at 1629 to 1635 (PQSRRTR) is the Nuclear localization signal element. Position 1644 is an N6-methyllysine (K1644). 3 positions are modified to phosphoserine: S1652, S1666, and S1715. A compositionally biased stretch (basic and acidic residues) spans 1665–1679 (RSAEEGELAESKSSQ). Positions 1723 to 1729 (KLKKKKV) match the Nuclear localization signal motif.

In terms of assembly, binds to the ANK repeat domain of TNKS1 and TNKS2. Post-translationally, ADP-ribosylated by TNKS1 (in vitro). Detected in testis, ovary, lung, skeletal muscle, heart, prostate and pancreas, and at very low levels in brain and peripheral blood leukocytes.

It is found in the nucleus. The protein resides in the cytoplasm. Its subcellular location is the cytoskeleton. The protein localises to the chromosome. The chain is 182 kDa tankyrase-1-binding protein (TNKS1BP1) from Homo sapiens (Human).